Reading from the N-terminus, the 969-residue chain is RNA polymerase-associated protein RapA (969 aa).

Residues 164 to 334 (EVGRRYAPRV…FARLRLLDPD (171 aa)) enclose the Helicase ATP-binding domain. Position 177-184 (177-184 (DEVGLGKT)) interacts with ATP. The DEAH box motif lies at 280–283 (DEAH). Residues 492-672 (RVNWLLELLK…GLEPLIEESA (181 aa)) enclose the Helicase C-terminal domain.

It belongs to the SNF2/RAD54 helicase family. RapA subfamily. Interacts with the RNAP. Has a higher affinity for the core RNAP than for the holoenzyme. Its ATPase activity is stimulated by binding to RNAP.

In terms of biological role, transcription regulator that activates transcription by stimulating RNA polymerase (RNAP) recycling in case of stress conditions such as supercoiled DNA or high salt concentrations. Probably acts by releasing the RNAP, when it is trapped or immobilized on tightly supercoiled DNA. Does not activate transcription on linear DNA. Probably not involved in DNA repair. This chain is RNA polymerase-associated protein RapA, found in Aliivibrio salmonicida (strain LFI1238) (Vibrio salmonicida (strain LFI1238)).